A 266-amino-acid chain; its full sequence is Acetyl esterase (266 aa).

The chain is Acetyl esterase (xynC) from Caldicellulosiruptor saccharolyticus (Caldocellum saccharolyticum).